A 63-amino-acid polypeptide reads, in one-letter code: Large ribosomal subunit protein bL28 (63 aa).

The protein belongs to the bacterial ribosomal protein bL28 family.

The sequence is that of Large ribosomal subunit protein bL28 from Geotalea uraniireducens (strain Rf4) (Geobacter uraniireducens).